Consider the following 435-residue polypeptide: Dual specificity protein kinase FUZ7 (435 aa).

The segment at 1 to 61 is disordered; it reads MLSSGAGSSI…TIGKSSAVTP (61 aa). Polar residues predominate over residues 46-59; sequence AASNASTIGKSSAV. The 309-residue stretch at 109-417 folds into the Protein kinase domain; that stretch reads LKTLSELGAG…PKDLTKHQYV (309 aa). ATP contacts are provided by residues 115 to 123 and Lys-138; that span reads LGAGNGGTV. Asp-231 (proton acceptor) is an active-site residue. A disordered region spans residues 307 to 359; it reads NEEDDDSDADNNYTNEDLAGTLSPTKPAPMISLGQNEKQRRRKSKPAGVSLEG.

The protein belongs to the protein kinase superfamily. STE Ser/Thr protein kinase family. MAP kinase kinase subfamily.

It catalyses the reaction L-seryl-[protein] + ATP = O-phospho-L-seryl-[protein] + ADP + H(+). It carries out the reaction L-threonyl-[protein] + ATP = O-phospho-L-threonyl-[protein] + ADP + H(+). The catalysed reaction is L-tyrosyl-[protein] + ATP = O-phospho-L-tyrosyl-[protein] + ADP + H(+). In terms of biological role, protein kinase that is necessary for a-locus-dependent processes, such as conjugation tube formation, filament formation, and maintenance of filamentous growth, and for a-locus-independent processes, such as tumor induction and teliospore germination. This Mycosarcoma maydis (Corn smut fungus) protein is Dual specificity protein kinase FUZ7 (FUZ7).